The following is a 156-amino-acid chain: Cyanate hydratase (156 aa).

Active-site residues include Arg-96, Glu-99, and Ser-122.

The protein belongs to the cyanase family. In terms of assembly, homodecamer composed of five homodimers.

It carries out the reaction cyanate + hydrogencarbonate + 3 H(+) = NH4(+) + 2 CO2. In terms of biological role, catalyzes the reaction of cyanate with bicarbonate to produce ammonia and carbon dioxide. The sequence is that of Cyanate hydratase (cynS) from Escherichia coli O157:H7.